The primary structure comprises 465 residues: Ribulose bisphosphate carboxylase large chain (465 aa).

Position 4 is an N6,N6,N6-trimethyllysine (Lys4). 2 residues coordinate substrate: Asn113 and Thr163. The active-site Proton acceptor is the Lys165. Residue Lys167 coordinates substrate. Residues Lys191, Asp193, and Glu194 each coordinate Mg(2+). Lys191 carries the N6-carboxylysine modification. The active-site Proton acceptor is the His284. Positions 285, 317, and 369 each coordinate substrate.

This sequence belongs to the RuBisCO large chain family. Type I subfamily. In terms of assembly, heterohexadecamer of 8 large chains and 8 small chains; disulfide-linked. The disulfide link is formed within the large subunit homodimers. The cofactor is Mg(2+). Post-translationally, the disulfide bond which can form in the large chain dimeric partners within the hexadecamer appears to be associated with oxidative stress and protein turnover.

The protein resides in the plastid. Its subcellular location is the chloroplast. The catalysed reaction is 2 (2R)-3-phosphoglycerate + 2 H(+) = D-ribulose 1,5-bisphosphate + CO2 + H2O. It catalyses the reaction D-ribulose 1,5-bisphosphate + O2 = 2-phosphoglycolate + (2R)-3-phosphoglycerate + 2 H(+). In terms of biological role, ruBisCO catalyzes two reactions: the carboxylation of D-ribulose 1,5-bisphosphate, the primary event in carbon dioxide fixation, as well as the oxidative fragmentation of the pentose substrate in the photorespiration process. Both reactions occur simultaneously and in competition at the same active site. This chain is Ribulose bisphosphate carboxylase large chain, found in Casuarina equisetifolia (Beach she-oak).